Reading from the N-terminus, the 305-residue chain is Glycine--tRNA ligase alpha subunit (305 aa).

Belongs to the class-II aminoacyl-tRNA synthetase family. As to quaternary structure, tetramer of two alpha and two beta subunits.

The protein localises to the cytoplasm. It catalyses the reaction tRNA(Gly) + glycine + ATP = glycyl-tRNA(Gly) + AMP + diphosphate. The chain is Glycine--tRNA ligase alpha subunit from Streptococcus pyogenes serotype M4 (strain MGAS10750).